The primary structure comprises 396 residues: 8-amino-7-oxononanoate synthase (396 aa).

Arginine 19 contacts substrate. 106–107 (GY) serves as a coordination point for pyridoxal 5'-phosphate. Position 131 (histidine 131) interacts with substrate. 3 residues coordinate pyridoxal 5'-phosphate: serine 176, histidine 204, and threonine 233. An N6-(pyridoxal phosphate)lysine modification is found at lysine 236. Threonine 350 contacts substrate.

It belongs to the class-II pyridoxal-phosphate-dependent aminotransferase family. BioF subfamily. As to quaternary structure, homodimer. Pyridoxal 5'-phosphate serves as cofactor.

It carries out the reaction 6-carboxyhexanoyl-[ACP] + L-alanine + H(+) = (8S)-8-amino-7-oxononanoate + holo-[ACP] + CO2. The protein operates within cofactor biosynthesis; biotin biosynthesis. Catalyzes the decarboxylative condensation of pimeloyl-[acyl-carrier protein] and L-alanine to produce 8-amino-7-oxononanoate (AON), [acyl-carrier protein], and carbon dioxide. This is 8-amino-7-oxononanoate synthase from Pseudomonas savastanoi pv. phaseolicola (strain 1448A / Race 6) (Pseudomonas syringae pv. phaseolicola (strain 1448A / Race 6)).